Consider the following 776-residue polypeptide: Protein SEY1 (776 aa).

Topologically, residues 1–681 (MADRPAIQLI…KRSIITTRTH (681 aa)) are cytoplasmic. Residues 34-263 (GLDYHVISVF…TENYYFKPQY (230 aa)) enclose the GB1/RHD3-type G domain. Position 44 to 51 (44 to 51 (GSQSSGKS)) interacts with GTP. A helical membrane pass occupies residues 682-702 (IPPWIYVLLAVLGWNEFVAVI). At 703 to 705 (RNP) the chain is on the lumenal side. A helical transmembrane segment spans residues 706–726 (LFVTLTLILGATFFVIHKFGL). The Cytoplasmic portion of the chain corresponds to 727 to 776 (WGPVVNVVQSAVGETRTAIKDKLRQFVVEDHEVKESFEMKDFSKNEQKEK).

The protein belongs to the TRAFAC class dynamin-like GTPase superfamily. GB1/RHD3 GTPase family. RHD3 subfamily. Interacts with RTN1 and YOP1; GTP binding is not required for these interactions.

Its subcellular location is the endoplasmic reticulum membrane. Functionally, cooperates with the reticulon proteins RTN1 and RTN2 and the tubule-shaping DP1 family protein YOP1 to generate and maintain the structure of the tubular endoplasmic reticulum network. Has GTPase activity, which is required for its function in ER organization. In Saccharomyces cerevisiae (strain ATCC 204508 / S288c) (Baker's yeast), this protein is Protein SEY1.